The following is a 268-amino-acid chain: UPF0294 protein ETA_26410 (268 aa).

It belongs to the UPF0294 family.

Its subcellular location is the cytoplasm. This Erwinia tasmaniensis (strain DSM 17950 / CFBP 7177 / CIP 109463 / NCPPB 4357 / Et1/99) protein is UPF0294 protein ETA_26410.